The chain runs to 96 residues: Co-chaperonin GroES (96 aa).

Belongs to the GroES chaperonin family. Heptamer of 7 subunits arranged in a ring. Interacts with the chaperonin GroEL.

It is found in the cytoplasm. Together with the chaperonin GroEL, plays an essential role in assisting protein folding. The GroEL-GroES system forms a nano-cage that allows encapsulation of the non-native substrate proteins and provides a physical environment optimized to promote and accelerate protein folding. GroES binds to the apical surface of the GroEL ring, thereby capping the opening of the GroEL channel. The chain is Co-chaperonin GroES from Shewanella denitrificans (strain OS217 / ATCC BAA-1090 / DSM 15013).